Here is a 349-residue protein sequence, read N- to C-terminus: MIAFDQLTWLHGKPQSSGLLKANPEDFLVVEDLGFAPDGEGEHVLVRILKNGCNTRFVADALAKFLKIHAREVSFAGQKDKHAVTEQWLCARVPGKEMPDLSKFQLEGCQVLEYARHKRKLRLGALKGNQFTVILREISHRQDVETRLQAIAERGVPNYFGAQRFGIGGSNLQGALRWAESDAPVRDRNKRSFWLSAARSALFNQQVSIRLKKTEFNQVVDGDALQLAGRGSWFVVTPEELEVSQARVHNRELMITAALPGSGDWGSQRDALAAEQAAIAEETSLQALLVREKVEAARRAMLLYPQQLSWNWWDDVTVELRFWLPAGSFATSVVRELINTTGDYANIAE.

Phe27 lines the substrate pocket. Residue Asp80 is the Nucleophile of the active site. Asn129 serves as a coordination point for substrate. The 149-residue stretch at 155–303 (GVPNYFGAQR…VEAARRAMLL (149 aa)) folds into the TRUD domain. Phe329 is a substrate binding site.

This sequence belongs to the pseudouridine synthase TruD family.

The catalysed reaction is uridine(13) in tRNA = pseudouridine(13) in tRNA. In terms of biological role, responsible for synthesis of pseudouridine from uracil-13 in transfer RNAs. The chain is tRNA pseudouridine synthase D from Klebsiella pneumoniae (strain 342).